The sequence spans 601 residues: Tripeptidyl-peptidase SED4 (601 aa).

A signal peptide spans 1 to 22 (MVSFTLRAIGACLVSLPALVTA). The propeptide at 23–202 (APTSHISGDF…SVFTSDLEIT (180 aa)) is removed in mature form. N-linked (GlcNAc...) asparagine glycosylation is found at Asn-210 and Asn-281. The 390-residue stretch at 212-601 (TITPDCIRDL…ETLSKLVLQY (390 aa)) folds into the Peptidase S53 domain. Active-site charge relay system residues include Glu-288 and Asp-292. A glycan (N-linked (GlcNAc...) asparagine) is linked at Asn-323. Catalysis depends on Ser-504, which acts as the Charge relay system. Residues Asp-546 and Ile-547 each coordinate Ca(2+). The N-linked (GlcNAc...) asparagine glycan is linked to Asn-575. Ca(2+) contacts are provided by Gly-579 and Asp-581.

The cofactor is Ca(2+).

It is found in the secreted. The protein resides in the extracellular space. It catalyses the reaction Release of an N-terminal tripeptide from a polypeptide.. Secreted tripeptidyl-peptidase which degrades proteins at acidic pHs and is involved in virulence. The protein is Tripeptidyl-peptidase SED4 (SED4) of Arthroderma otae (strain ATCC MYA-4605 / CBS 113480) (Microsporum canis).